The following is a 299-amino-acid chain: Porphobilinogen deaminase (299 aa).

At Cys-242 the chain carries S-(dipyrrolylmethanemethyl)cysteine.

Belongs to the HMBS family. Monomer. Requires dipyrromethane as cofactor.

The catalysed reaction is 4 porphobilinogen + H2O = hydroxymethylbilane + 4 NH4(+). Its pathway is porphyrin-containing compound metabolism; protoporphyrin-IX biosynthesis; coproporphyrinogen-III from 5-aminolevulinate: step 2/4. Functionally, tetrapolymerization of the monopyrrole PBG into the hydroxymethylbilane pre-uroporphyrinogen in several discrete steps. This Rickettsia prowazekii (strain Madrid E) protein is Porphobilinogen deaminase (hemC).